The following is a 168-amino-acid chain: Photosystem I assembly protein Ycf3 (168 aa).

TPR repeat units lie at residues 35-68, 72-105, and 120-153; these read AFTY…EMDP, SYIL…NPFL, and GEQA…TPGN.

It belongs to the Ycf3 family.

The protein localises to the plastid. It localises to the chloroplast thylakoid membrane. In terms of biological role, essential for the assembly of the photosystem I (PSI) complex. May act as a chaperone-like factor to guide the assembly of the PSI subunits. In Plantago lanceolata (English plantain), this protein is Photosystem I assembly protein Ycf3.